Here is a 505-residue protein sequence, read N- to C-terminus: Ribosomal RNA small subunit methyltransferase F (505 aa).

S-adenosyl-L-methionine-binding positions include 123–129 (ASAPGSK), glutamate 147, aspartate 174, and aspartate 192. Residue cysteine 245 is the Nucleophile of the active site. A disordered region spans residues 409 to 437 (GTNANNNSNTNPNNNANTNPNNNSNTNPR). Positions 410-435 (TNANNNSNTNPNNNANTNPNNNSNTN) are enriched in low complexity.

The protein belongs to the class I-like SAM-binding methyltransferase superfamily. RsmB/NOP family.

It is found in the cytoplasm. It catalyses the reaction cytidine(1407) in 16S rRNA + S-adenosyl-L-methionine = 5-methylcytidine(1407) in 16S rRNA + S-adenosyl-L-homocysteine + H(+). Functionally, specifically methylates the cytosine at position 1407 (m5C1407) of 16S rRNA. This Shewanella denitrificans (strain OS217 / ATCC BAA-1090 / DSM 15013) protein is Ribosomal RNA small subunit methyltransferase F.